The primary structure comprises 101 residues: STAS-domain containing protein PA14_20770 (101 aa).

Positions 14–101 (LTIQIQGRFD…SNFEQLFKIS (88 aa)) constitute an STAS domain.

Phosphorylated on a serine residue, possibly on Ser-56.

Its subcellular location is the secreted. The sequence is that of STAS-domain containing protein PA14_20770 from Pseudomonas aeruginosa (strain UCBPP-PA14).